Reading from the N-terminus, the 163-residue chain is Neurotrophin-3 (163 aa).

A signal peptide spans 1–3 (IQS). Residues 4 to 119 (TSMDQGILTE…VLNRTSRRKR (116 aa)) constitute a propeptide that is removed on maturation. Asn-112 carries N-linked (GlcNAc...) asparagine glycosylation.

Belongs to the NGF-beta family.

Its subcellular location is the secreted. Seems to promote the survival of visceral and proprioceptive sensory neurons. This is Neurotrophin-3 (NTF3) from Epicrates cenchria (Rainbow boa).